Consider the following 188-residue polypeptide: UPF0301 protein MCA2336 2 (188 aa).

The protein belongs to the UPF0301 (AlgH) family.

The polypeptide is UPF0301 protein MCA2336 2 (Methylococcus capsulatus (strain ATCC 33009 / NCIMB 11132 / Bath)).